Consider the following 526-residue polypeptide: ATP synthase subunit alpha (526 aa).

Residue 171-178 (GDRQVGKT) coordinates ATP.

The protein belongs to the ATPase alpha/beta chains family. F-type ATPases have 2 components, CF(1) - the catalytic core - and CF(0) - the membrane proton channel. CF(1) has five subunits: alpha(3), beta(3), gamma(1), delta(1), epsilon(1). CF(0) has three main subunits: a(1), b(2) and c(9-12). The alpha and beta chains form an alternating ring which encloses part of the gamma chain. CF(1) is attached to CF(0) by a central stalk formed by the gamma and epsilon chains, while a peripheral stalk is formed by the delta and b chains.

The protein localises to the cell inner membrane. It catalyses the reaction ATP + H2O + 4 H(+)(in) = ADP + phosphate + 5 H(+)(out). Its function is as follows. Produces ATP from ADP in the presence of a proton gradient across the membrane. The alpha chain is a regulatory subunit. The polypeptide is ATP synthase subunit alpha (Azobacteroides pseudotrichonymphae genomovar. CFP2).